A 603-amino-acid chain; its full sequence is DNA mismatch repair protein MutL (603 aa).

The protein belongs to the DNA mismatch repair MutL/HexB family.

Functionally, this protein is involved in the repair of mismatches in DNA. It is required for dam-dependent methyl-directed DNA mismatch repair. May act as a 'molecular matchmaker', a protein that promotes the formation of a stable complex between two or more DNA-binding proteins in an ATP-dependent manner without itself being part of a final effector complex. The chain is DNA mismatch repair protein MutL from Nitrobacter winogradskyi (strain ATCC 25391 / DSM 10237 / CIP 104748 / NCIMB 11846 / Nb-255).